Here is a 713-residue protein sequence, read N- to C-terminus: Cadherin-13 (713 aa).

A signal peptide spans 1-22 (MQPATPLVLCVLLSQVLLLTSA). A propeptide spanning residues 23-138 (EDLDCTPGFQ…RTSPVPRQKR (116 aa)) is cleaved from the precursor. N52 and N86 each carry an N-linked (GlcNAc...) asparagine glycan. 5 Cadherin domains span residues 139 to 245 (SIVV…RPIF), 246 to 363 (REGP…SPKF), 364 to 477 (TKKE…SPVF), 478 to 585 (YPDP…APFI), and 584 to 694 (FIYP…AAGA). The interval 156–178 (PRDVGKVVDSDRPEGSKFRLTGK) is disordered. Basic and acidic residues predominate over residues 158-172 (DVGKVVDSDRPEGSK). N-linked (GlcNAc...) asparagine glycosylation is found at N382, N489, N500, N530, N598, N638, and N671. G693 is lipidated: GPI-anchor amidated glycine. The propeptide at 694-713 (APHFSAATALLLSLFSLARL) is removed in mature form.

By contrast to classical cadherins, homodimerization in trans is not mediated by cadherin EC1 domain strand-swapping, but instead through a homophilic adhesive interface which joins two elongated EC1-EC2 domains through a region near their Ca2+-binding sites to form a tetrahedral, X-like shape.

It is found in the cell membrane. The protein resides in the cytoplasm. Its function is as follows. Cadherins are calcium-dependent cell adhesion proteins. They preferentially interact with themselves in a homophilic manner in connecting cells; cadherins may thus contribute to the sorting of heterogeneous cell types. May act as a negative regulator of neural cell growth. The protein is Cadherin-13 (CDH13) of Bos taurus (Bovine).